A 265-amino-acid chain; its full sequence is 3-methyl-2-oxobutanoate hydroxymethyltransferase (265 aa).

Mg(2+)-binding residues include Asp44 and Asp83. Residues 44–45 (DS), Asp83, and Lys113 each bind 3-methyl-2-oxobutanoate. A Mg(2+)-binding site is contributed by Glu115. Glu183 (proton acceptor) is an active-site residue.

This sequence belongs to the PanB family. In terms of assembly, homodecamer; pentamer of dimers. Mg(2+) serves as cofactor.

The protein resides in the cytoplasm. The catalysed reaction is 3-methyl-2-oxobutanoate + (6R)-5,10-methylene-5,6,7,8-tetrahydrofolate + H2O = 2-dehydropantoate + (6S)-5,6,7,8-tetrahydrofolate. It functions in the pathway cofactor biosynthesis; (R)-pantothenate biosynthesis; (R)-pantoate from 3-methyl-2-oxobutanoate: step 1/2. Its function is as follows. Catalyzes the reversible reaction in which hydroxymethyl group from 5,10-methylenetetrahydrofolate is transferred onto alpha-ketoisovalerate to form ketopantoate. The protein is 3-methyl-2-oxobutanoate hydroxymethyltransferase of Leptospira borgpetersenii serovar Hardjo-bovis (strain JB197).